The following is a 180-amino-acid chain: NAD(P)H-quinone oxidoreductase subunit I, chloroplastic (180 aa).

2 consecutive 4Fe-4S ferredoxin-type domains span residues 55 to 84 (GRIHFEFDKCIACEVCVRVCPIDLPVVDWR) and 95 to 124 (LNYSIDFGVCIFCGNCVEYCPTSCLSMTEE). Cysteine 64, cysteine 67, cysteine 70, cysteine 74, cysteine 104, cysteine 107, cysteine 110, and cysteine 114 together coordinate [4Fe-4S] cluster.

The protein belongs to the complex I 23 kDa subunit family. NDH is composed of at least 16 different subunits, 5 of which are encoded in the nucleus. It depends on [4Fe-4S] cluster as a cofactor.

The protein localises to the plastid. It is found in the chloroplast thylakoid membrane. The enzyme catalyses a plastoquinone + NADH + (n+1) H(+)(in) = a plastoquinol + NAD(+) + n H(+)(out). It catalyses the reaction a plastoquinone + NADPH + (n+1) H(+)(in) = a plastoquinol + NADP(+) + n H(+)(out). In terms of biological role, NDH shuttles electrons from NAD(P)H:plastoquinone, via FMN and iron-sulfur (Fe-S) centers, to quinones in the photosynthetic chain and possibly in a chloroplast respiratory chain. The immediate electron acceptor for the enzyme in this species is believed to be plastoquinone. Couples the redox reaction to proton translocation, and thus conserves the redox energy in a proton gradient. This Agrostis stolonifera (Creeping bentgrass) protein is NAD(P)H-quinone oxidoreductase subunit I, chloroplastic.